The chain runs to 618 residues: Dihydroxy-acid dehydratase (618 aa).

Asp-81 is a binding site for Mg(2+). Cys-122 is a [2Fe-2S] cluster binding site. Positions 123 and 124 each coordinate Mg(2+). Lys-124 carries the N6-carboxylysine modification. Residue Cys-197 coordinates [2Fe-2S] cluster. Glu-493 is a Mg(2+) binding site. Residue Ser-519 is the Proton acceptor of the active site.

It belongs to the IlvD/Edd family. As to quaternary structure, homodimer. The cofactor is [2Fe-2S] cluster. Mg(2+) is required as a cofactor.

It catalyses the reaction (2R)-2,3-dihydroxy-3-methylbutanoate = 3-methyl-2-oxobutanoate + H2O. The catalysed reaction is (2R,3R)-2,3-dihydroxy-3-methylpentanoate = (S)-3-methyl-2-oxopentanoate + H2O. It participates in amino-acid biosynthesis; L-isoleucine biosynthesis; L-isoleucine from 2-oxobutanoate: step 3/4. The protein operates within amino-acid biosynthesis; L-valine biosynthesis; L-valine from pyruvate: step 3/4. In terms of biological role, functions in the biosynthesis of branched-chain amino acids. Catalyzes the dehydration of (2R,3R)-2,3-dihydroxy-3-methylpentanoate (2,3-dihydroxy-3-methylvalerate) into 2-oxo-3-methylpentanoate (2-oxo-3-methylvalerate) and of (2R)-2,3-dihydroxy-3-methylbutanoate (2,3-dihydroxyisovalerate) into 2-oxo-3-methylbutanoate (2-oxoisovalerate), the penultimate precursor to L-isoleucine and L-valine, respectively. The chain is Dihydroxy-acid dehydratase from Bordetella avium (strain 197N).